The chain runs to 957 residues: Vacuolar membrane protease (957 aa).

The Cytoplasmic segment spans residues 1 to 10 (MARYNPFSFT). The chain crosses the membrane as a helical span at residues 11–31 (PGPVVFFTTVIYVGLFAALLV). The Vacuolar portion of the chain corresponds to 32–369 (THLTVPDYPS…RVFVVFQLHT (338 aa)). 3 N-linked (GlcNAc...) asparagine glycosylation sites follow: Asn48, Asn105, and Asn136. The Zn(2+) site is built by His152 and Asp164. The active-site Proton acceptor is Glu198. Residues Glu199, Glu224, and His297 each coordinate Zn(2+). The chain crosses the membrane as a helical span at residues 370–390 (LFALCVTLLVVAPIALIGLTF). Residues 391–423 (GLSKADKNYLLARKAFVYSSDDDNPVQLYGWRG) are Cytoplasmic-facing. The helical transmembrane segment at 424-444 (FFRFPIVFVSATAVVVALAYL) threads the bilayer. The Vacuolar portion of the chain corresponds to 445–450 (LVRFNA). A helical transmembrane segment spans residues 451-471 (FIIYSSPFAVWSMMLSAWFFV). The Cytoplasmic portion of the chain corresponds to 472–490 (AWFFSRGADAMRPSALQRM). The helical transmembrane segment at 491-511 (YALIWLFIGSFVLLTIITVFV) threads the bilayer. The Vacuolar portion of the chain corresponds to 512 to 521 (NNYQVVAGYP). Residues 522-542 (ALFYFAVVFAALMLSYLELFF) traverse the membrane as a helical segment. The Cytoplasmic segment spans residues 543-642 (APTKSAYARH…YPGEQEWSGK (100 aa)). Disordered regions lie at residues 560–591 (RRNS…DATE) and 603–628 (FTRY…RRLD). Positions 564–577 (ESASRPLTGSTTAA) are enriched in polar residues. Residues 643 to 663 (LPSWIWIIQLLLLAPLVIVLV) traverse the membrane as a helical segment. The Vacuolar segment spans residues 664–685 (GQVALLLTSALYQTPSDGNSPL). A helical membrane pass occupies residues 686–706 (FIYLAIAALSVLLLAPTGPFI). Over 707-713 (HRFTYHV) the chain is Cytoplasmic. The chain crosses the membrane as a helical span at residues 714–734 (PTFLFLVCLATVIYNLVAFPF). At 735-957 (SRDHRLKVYF…LVEGFKQFEI (223 aa)) the chain is on the vacuolar side. Asn782, Asn818, and Asn834 each carry an N-linked (GlcNAc...) asparagine glycan.

This sequence belongs to the peptidase M28 family. Zn(2+) is required as a cofactor.

The protein localises to the vacuole membrane. Functionally, may be involved in vacuolar sorting and osmoregulation. This is Vacuolar membrane protease from Pyrenophora tritici-repentis (strain Pt-1C-BFP) (Wheat tan spot fungus).